A 120-amino-acid polypeptide reads, in one-letter code: Natriuretic peptide (120 aa).

The N-terminal stretch at 1–25 (MVGLSRLADGGLLLVLALLPLALDG) is a signal peptide. Positions 26–70 (KPAPLEKAPMAPARIIPYLRPVGKESRAALDRMVPPEDGDSRRLE) are excised as a propeptide. A disulfide bridge links C81 with C97. A propeptide spanning residues 110-120 (ILPYLRPIRKE) is cleaved from the precursor.

Belongs to the natriuretic peptide family. Expressed by the venom gland.

The protein resides in the secreted. Functionally, natriuretic peptide that dose-dependently induces the rapid relaxation of rat aortic strips phenylephrine-precontracted. Acts by stimulating cGMP production in a dose-dependent manner (by probably activating NPR1 and/or NPR2). May also show potent hypotensive effects. This chain is Natriuretic peptide, found in Micrurus altirostris (Uruguayan coral snake).